The sequence spans 146 residues: Putative ankyrin repeat protein FPV224 (146 aa).

ANK repeat units lie at residues 9-38 (SLSTPLHHAINLLKTDIVSLLMQYKADASI), 42-79 (KGITPFCYAMYLGYYGVNKDILNIITRYNSINGTTRDI), 94-126 (YVFVNLHDAARLGYVYILKKIIYNGKNINRIDE), and 127-145 (YYYSALHYAVKSSNLKAVN).

This is Putative ankyrin repeat protein FPV224 from Fowlpox virus (strain NVSL) (FPV).